The primary structure comprises 490 residues: Cytochrome P450 monooxygenase anuE (490 aa).

Heme is bound at residue cysteine 405.

The protein belongs to the cytochrome P450 family. Heme serves as cofactor.

It catalyses the reaction 2-hydroxymethyl-3-pentylphenol + reduced [NADPH--hemoprotein reductase] + O2 = (8S)-annullatin E + oxidized [NADPH--hemoprotein reductase] + H2O + H(+). It functions in the pathway secondary metabolite biosynthesis. Functionally, cytochrome P450 monooxygenase; part of the gene cluster that mediates the biosynthesis of annullatin D, an alkylated aromatic polyketide with a fused dihydrobenzofuran lactone ring system that exhibits potent agonistic activities toward the cannabinoid receptors. Within the pathway, anuE catalyzes the hydroxylation of 2-hydroxymethyl-3-pentylphenol at the side chain to produce (8S)-annullatin E. The annullatin backbone 2-hydroxymethyl-3-pentylphenol is assembled from one acetyl-CoA starter unit and 5 malonyl-CoA elongation units by cooperation of the highly reducing polyketide synthase anuA, the short-chain dehydrogenase anuB and the oxidoreductase anuC, before being hydroxylated at the C-5 alkyl chain by the cytochrome P450 monooxygenase anuE to form (8S)-annullatin E. The prenyltransferase anuH subsequently installs one isoprenyl group at the benzene ring to form (8S)-annullatin J. Enzymatic or nonenzymatic dihydro-benzofuran ring formation between the prenyl and the phenolic hydroxyl groups in (8S)-annullatin J results in two diastereomers (2S,9S)-annullatin H and compound 12. The intermediate (2S,9S)-annullatin H is then converted to (2S,9S)-annullatin D by the FAD-linked oxidoreductase anuG-catalyzed five-member lactone ring formation. The isomer 12 acts as a substrate for the short-chain dehydrogenase anuF and is oxidized to (2R)-annullatin F, which is subsequently acetylated by an acetyltransferase leading to (2R)-annullatin G formation. The remaining enzymes identified within the cluster, anuD, anuI and anuJ, seem not to be involved in annullatin biosynthesis. The polypeptide is Cytochrome P450 monooxygenase anuE (Penicillium roqueforti (strain FM164)).